The sequence spans 505 residues: Glycerol kinase (505 aa).

Position 12 (Thr-12) interacts with ADP. Residues Thr-12, Thr-13, and Ser-14 each contribute to the ATP site. Thr-12 contacts sn-glycerol 3-phosphate. Arg-16 lines the ADP pocket. The sn-glycerol 3-phosphate site is built by Arg-82, Glu-83, Tyr-134, and Asp-249. Glycerol contacts are provided by Arg-82, Glu-83, Tyr-134, Asp-249, and Gln-250. ADP contacts are provided by Thr-271 and Gly-315. ATP contacts are provided by Thr-271, Gly-315, Gln-319, and Gly-416. ADP contacts are provided by Gly-416 and Asn-420.

It belongs to the FGGY kinase family.

The catalysed reaction is glycerol + ATP = sn-glycerol 3-phosphate + ADP + H(+). It participates in polyol metabolism; glycerol degradation via glycerol kinase pathway; sn-glycerol 3-phosphate from glycerol: step 1/1. Inhibited by fructose 1,6-bisphosphate (FBP). In terms of biological role, key enzyme in the regulation of glycerol uptake and metabolism. Catalyzes the phosphorylation of glycerol to yield sn-glycerol 3-phosphate. The sequence is that of Glycerol kinase from Mycolicibacterium vanbaalenii (strain DSM 7251 / JCM 13017 / BCRC 16820 / KCTC 9966 / NRRL B-24157 / PYR-1) (Mycobacterium vanbaalenii).